The chain runs to 450 residues: Phosphoglucosamine mutase (450 aa).

The Phosphoserine intermediate role is filled by Ser103. Mg(2+)-binding residues include Ser103, Asp243, Asp245, and Asp247. The residue at position 103 (Ser103) is a Phosphoserine.

Belongs to the phosphohexose mutase family. It depends on Mg(2+) as a cofactor. In terms of processing, activated by phosphorylation.

It carries out the reaction alpha-D-glucosamine 1-phosphate = D-glucosamine 6-phosphate. Its function is as follows. Catalyzes the conversion of glucosamine-6-phosphate to glucosamine-1-phosphate. The protein is Phosphoglucosamine mutase of Latilactobacillus sakei subsp. sakei (strain 23K) (Lactobacillus sakei subsp. sakei).